The chain runs to 151 residues: Cyanate hydratase (151 aa).

Residues Arg-92, Glu-95, and Ser-118 contribute to the active site.

It belongs to the cyanase family.

The catalysed reaction is cyanate + hydrogencarbonate + 3 H(+) = NH4(+) + 2 CO2. In terms of biological role, catalyzes the reaction of cyanate with bicarbonate to produce ammonia and carbon dioxide. The chain is Cyanate hydratase from Coprinopsis cinerea (strain Okayama-7 / 130 / ATCC MYA-4618 / FGSC 9003) (Inky cap fungus).